The sequence spans 268 residues: Interleukin-1 alpha (268 aa).

Positions 1 to 112 are excised as a propeptide; sequence MAKVPDLFED…DTEEEIIKPR (112 aa). The residue at position 82 (K82) is an N6-acetyllysine. The interval 82 to 86 is nuclear localization signal (NLS); it reads KKRRL. Phosphoserine is present on S87. N-linked (GlcNAc...) asparagine glycans are attached at residues N102 and N141.

The protein belongs to the IL-1 family. As to quaternary structure, monomer. Interacts with TMED10; the interaction mediates the translocation from the cytoplasm into the ERGIC (endoplasmic reticulum-Golgi intermediate compartment) and thereby secretion. Interacts with IL1R1. Interacts with S100A13; this interaction is the first step in the export of IL1A, followed by direct translocation of this complex across the plasma membrane. In terms of processing, acetylated within its nuclear localization sequence, which impacts subcellular localization. Post-translationally, proteolytic processed by CAPN1 in a calcium-dependent manner. Cleavage from 31 kDa precursor to 18 kDa biologically active molecules. Phosphorylated. Phosphorylation greatly enhances susceptibility to digestion and promotes the conversion of pre-IL1A alpha to the biologically active IL1A.

Its subcellular location is the nucleus. The protein resides in the cytoplasm. It is found in the secreted. Cytokine constitutively present intracellularly in nearly all resting non-hematopoietic cells that plays an important role in inflammation and bridges the innate and adaptive immune systems. After binding to its receptor IL1R1 together with its accessory protein IL1RAP, forms the high affinity interleukin-1 receptor complex. Signaling involves the recruitment of adapter molecules such as MYD88, IRAK1 or IRAK4. In turn, mediates the activation of NF-kappa-B and the three MAPK pathways p38, p42/p44 and JNK pathways. Within the cell, acts as an alarmin and cell death results in its liberation in the extracellular space after disruption of the cell membrane to induce inflammation and alert the host to injury or damage. In addition to its role as a danger signal, which occurs when the cytokine is passively released by cell necrosis, directly senses DNA damage and acts as signal for genotoxic stress without loss of cell integrity. The sequence is that of Interleukin-1 alpha (IL1A) from Capra hircus (Goat).